A 385-amino-acid chain; its full sequence is Multidrug resistance protein MdtE (385 aa).

The N-terminal stretch at 1-20 is a signal peptide; that stretch reads MNRRRKLLIPLLFCGAMLTA. C21 carries N-palmitoyl cysteine lipidation. A lipid anchor (S-diacylglycerol cysteine) is attached at C21.

Belongs to the membrane fusion protein (MFP) (TC 8.A.1) family. As to quaternary structure, homotrimer. Part of the tripartite efflux system MdtEF-TolC, which is composed of an inner membrane transporter, MdtF, a membrane fusion protein, MdtE, and an outer membrane component, TolC. The complex forms a large protein conduit and can translocate molecules across both the inner and outer membranes.

It localises to the cell inner membrane. In terms of biological role, part of the tripartite efflux system MdtEF-TolC, which confers resistance to compounds such as rhodamine 6G, erythromycin, doxorubicin, ethidium bromide, TPP, SDS, deoxycholate, crystal violet and benzalkonium. This is Multidrug resistance protein MdtE (mdtE) from Escherichia coli (strain K12).